The primary structure comprises 892 residues: Alanine--tRNA ligase (892 aa).

His596, His600, Cys700, and His704 together coordinate Zn(2+).

It belongs to the class-II aminoacyl-tRNA synthetase family. The cofactor is Zn(2+).

Its subcellular location is the cytoplasm. It carries out the reaction tRNA(Ala) + L-alanine + ATP = L-alanyl-tRNA(Ala) + AMP + diphosphate. In terms of biological role, catalyzes the attachment of alanine to tRNA(Ala) in a two-step reaction: alanine is first activated by ATP to form Ala-AMP and then transferred to the acceptor end of tRNA(Ala). Also edits incorrectly charged Ser-tRNA(Ala) and Gly-tRNA(Ala) via its editing domain. The sequence is that of Alanine--tRNA ligase from Methanococcus vannielii (strain ATCC 35089 / DSM 1224 / JCM 13029 / OCM 148 / SB).